Reading from the N-terminus, the 529-residue chain is Lanosterol 14-alpha demethylase (529 aa).

Residue cysteine 468 coordinates heme.

This sequence belongs to the cytochrome P450 family. The cofactor is heme.

The protein resides in the membrane. The enzyme catalyses a 14alpha-methyl steroid + 3 reduced [NADPH--hemoprotein reductase] + 3 O2 = a Delta(14) steroid + formate + 3 oxidized [NADPH--hemoprotein reductase] + 4 H2O + 4 H(+). The catalysed reaction is a 14alpha-methyl steroid + reduced [NADPH--hemoprotein reductase] + O2 = a 14alpha-hydroxymethyl steroid + oxidized [NADPH--hemoprotein reductase] + H2O + H(+). It catalyses the reaction a 14alpha-hydroxymethyl steroid + reduced [NADPH--hemoprotein reductase] + O2 = a 14alpha-formyl steroid + oxidized [NADPH--hemoprotein reductase] + 2 H2O + H(+). It carries out the reaction a 14alpha-formyl steroid + reduced [NADPH--hemoprotein reductase] + O2 = a Delta(14) steroid + formate + oxidized [NADPH--hemoprotein reductase] + H2O + 2 H(+). The enzyme catalyses lanosterol + 3 reduced [NADPH--hemoprotein reductase] + 3 O2 = 4,4-dimethyl-5alpha-cholesta-8,14,24-trien-3beta-ol + formate + 3 oxidized [NADPH--hemoprotein reductase] + 4 H2O + 4 H(+). The catalysed reaction is lanosterol + reduced [NADPH--hemoprotein reductase] + O2 = 32-hydroxylanosterol + oxidized [NADPH--hemoprotein reductase] + H2O + H(+). It catalyses the reaction 32-hydroxylanosterol + reduced [NADPH--hemoprotein reductase] + O2 = 32-oxolanosterol + oxidized [NADPH--hemoprotein reductase] + 2 H2O + H(+). It carries out the reaction 32-oxolanosterol + reduced [NADPH--hemoprotein reductase] + O2 = 4,4-dimethyl-5alpha-cholesta-8,14,24-trien-3beta-ol + formate + oxidized [NADPH--hemoprotein reductase] + H2O + 2 H(+). The enzyme catalyses eburicol + 3 reduced [NADPH--hemoprotein reductase] + 3 O2 = 14-demethyleburicol + formate + 3 oxidized [NADPH--hemoprotein reductase] + 4 H2O + 4 H(+). The catalysed reaction is eburicol + reduced [NADPH--hemoprotein reductase] + O2 = 32-hydroxyeburicol + oxidized [NADPH--hemoprotein reductase] + H2O + H(+). It catalyses the reaction 32-hydroxyeburicol + reduced [NADPH--hemoprotein reductase] + O2 = 32-oxoeburicol + oxidized [NADPH--hemoprotein reductase] + 2 H2O + H(+). It carries out the reaction 32-oxoeburicol + reduced [NADPH--hemoprotein reductase] + O2 = 14-demethyleburicol + formate + oxidized [NADPH--hemoprotein reductase] + H2O + 2 H(+). The protein operates within steroid biosynthesis; zymosterol biosynthesis; zymosterol from lanosterol: step 1/6. Its function is as follows. Sterol 14alpha-demethylase that plays a critical role in the third module of ergosterol biosynthesis pathway, being ergosterol the major sterol component in fungal membranes that participates in a variety of functions. The third module or late pathway involves the ergosterol synthesis itself through consecutive reactions that mainly occur in the endoplasmic reticulum (ER) membrane. In filamentous fungi, during the initial step of this module, lanosterol (lanosta-8,24-dien-3beta-ol) can be metabolized to eburicol. Sterol 14alpha-demethylase catalyzes the three-step oxidative removal of the 14alpha-methyl group (C-32) of both these sterols in the form of formate, and converts eburicol and lanosterol to 14-demethyleburicol (4,4,24-trimethylergosta-8,14,24(28)-trienol) and 4,4-dimethyl-5alpha-cholesta-8,14,24-trien-3beta-ol, respectively, which are further metabolized by other enzymes in the pathway to ergosterol. Can also use substrates not intrinsic to fungi, such as 24,25-dihydrolanosterol (DHL), producing 4,4-dimethyl-8,14-cholestadien-3-beta-ol, but at lower rates than the endogenous substrates. The polypeptide is Lanosterol 14-alpha demethylase (ERG11) (Eremothecium gossypii (strain ATCC 10895 / CBS 109.51 / FGSC 9923 / NRRL Y-1056) (Yeast)).